Here is a 194-residue protein sequence, read N- to C-terminus: uncharacterized protein (194 aa).

2 disordered regions span residues 1–72 (MAAK…PAAE) and 113–194 (VLIP…SLAV). Residues 26–39 (AEGRSSEGRKERTA) show a composition bias toward basic and acidic residues. A compositionally biased stretch (polar residues) spans 146-171 (GSSSTSRNQVASLAYRTQNTAASQPR).

This is an uncharacterized protein from Homo sapiens (Human).